We begin with the raw amino-acid sequence, 171 residues long: uncharacterized protein (171 aa).

This is an uncharacterized protein from Saccharomyces cerevisiae (strain ATCC 204508 / S288c) (Baker's yeast).